Here is a 407-residue protein sequence, read N- to C-terminus: MSVLITGVGVVAPNGLGLAPYWSAVLDGRHGLGPVTRFDVSRYPATLAGQIDDFHAPDHIPGRLLPQTDPSTRLALTAADWALQDAKADPESLTDYDMGVVTANACGGFDFTHREFRKLWSEGPKSVSVYESFAWFYAVNTGQISIRHGMRGPSSALVAEQAGGLDALGHARRTIRRGTPLVVSGGVDSALDPWGWVSQIASGRISTATDPDRAYLPFDERAAGYVPGEGGAILVLEDSAAAEARGRHDAYGELAGCASTFDPAPGSGRPAGLERAIRLALNDAGTGPEDVDVVFADGAGVPELDAAEARAIGRVFGREGVPVTVPKTTTGRLYSGGGPLDVVTALMSLREGVIAPTAGVTSVPREYGIDLVLGEPRSTAPRTALVLARGRWGFNSAAVLRRFAPTP.

The Ketosynthase family 3 (KS3) domain occupies 1 to 402; it reads MSVLITGVGV…GFNSAAVLRR (402 aa).

The protein belongs to the thiolase-like superfamily. Beta-ketoacyl-ACP synthases family.

This Streptomyces coelicolor (strain ATCC BAA-471 / A3(2) / M145) protein is Actinorhodin polyketide putative beta-ketoacyl synthase 2.